The primary structure comprises 304 residues: MNRAFSRKKDKTWMHTPEALSKHFIPYNAKFLGSTEVEQPKGTEVVRDAVRKLKFARHIKKSEGQKIPKVELQISIYGVKILEPKTKEVQHNCQLHRISFCADDKTDKRIFTFICKDSESNKHLCYVFDSEKCAEEITLTIGQAFDLAYRKFLESGGKDVETRKQIAGLQKRIQDLETENMELKNKVQDLENQLRITQVSAPPAGSMTPKSPSTDIFDMIPFSPISHQSSMPTRNGTQPPPVPSRSTEIKRDLFGAEPFDPFNCGAADFPPDIQSKLDEMQEGFKMGLTLEGTVFCLDPLDSRC.

Thr16 is subject to Phosphothreonine. The PID domain maps to Ser21–Leu176. A coiled-coil region spans residues Lys158–Pro202. The residue at position 223 (Ser223) is a Phosphoserine. The disordered stretch occupies residues Ser223–Ser246. The span at Ile225–Thr237 shows a compositional bias: polar residues.

This sequence belongs to the ced-6 family. Homodimer. Interacts with clathrin. Interacts with GDP-bound ARF6, but not with GTP-bound ARF6. Part of a complex composed of GULP1, ACAP1 and ARF6. Interacts with ACAP1, LRP1, MEGF10 and STAB2. As to expression, widely expressed. Detected in macrophages, pancreas, kidney, skeletal muscle, heart, colon, intestine, lung, placenta and ovary.

The protein localises to the cytoplasm. Its function is as follows. May function as an adapter protein. Required for efficient phagocytosis of apoptotic cells. Modulates cellular glycosphingolipid and cholesterol transport. May play a role in the internalization and endosomal trafficking of various LRP1 ligands, such as PSAP. Increases cellular levels of GTP-bound ARF6. The protein is PTB domain-containing engulfment adapter protein 1 (GULP1) of Homo sapiens (Human).